The primary structure comprises 557 residues: DNA mismatch repair protein MutL (557 aa).

This sequence belongs to the DNA mismatch repair MutL/HexB family.

In terms of biological role, this protein is involved in the repair of mismatches in DNA. It is required for dam-dependent methyl-directed DNA mismatch repair. May act as a 'molecular matchmaker', a protein that promotes the formation of a stable complex between two or more DNA-binding proteins in an ATP-dependent manner without itself being part of a final effector complex. This Methanothrix thermoacetophila (strain DSM 6194 / JCM 14653 / NBRC 101360 / PT) (Methanosaeta thermophila) protein is DNA mismatch repair protein MutL.